Here is a 454-residue protein sequence, read N- to C-terminus: tRNA modification GTPase MnmE (454 aa).

Residues Arg23, Glu80, and Lys120 each coordinate (6S)-5-formyl-5,6,7,8-tetrahydrofolate. A TrmE-type G domain is found at 216 to 377 (GMKVVIAGRP…LRDHLKQSMG (162 aa)). Position 226 (Asn226) interacts with K(+). GTP-binding positions include 226-231 (NAGKSS), 245-251 (TDIAGTT), 270-273 (DTAG), 335-338 (NKAD), and 358-360 (SAR). Ser230 serves as a coordination point for Mg(2+). Positions 245, 247, and 250 each coordinate K(+). Residue Thr251 coordinates Mg(2+). Lys454 is a binding site for (6S)-5-formyl-5,6,7,8-tetrahydrofolate.

This sequence belongs to the TRAFAC class TrmE-Era-EngA-EngB-Septin-like GTPase superfamily. TrmE GTPase family. Homodimer. Heterotetramer of two MnmE and two MnmG subunits. Requires K(+) as cofactor.

Its subcellular location is the cytoplasm. Exhibits a very high intrinsic GTPase hydrolysis rate. Involved in the addition of a carboxymethylaminomethyl (cmnm) group at the wobble position (U34) of certain tRNAs, forming tRNA-cmnm(5)s(2)U34. The chain is tRNA modification GTPase MnmE from Pectobacterium carotovorum subsp. carotovorum (strain PC1).